We begin with the raw amino-acid sequence, 495 residues long: ATP-NADH kinase YEF1 (495 aa).

The segment at 442-480 (KYRLDSSKNGNDTISNPLESSCISSDAQDEERKSVTETE) is disordered. A compositionally biased stretch (polar residues) spans 448 to 467 (SKNGNDTISNPLESSCISSD).

Belongs to the NAD kinase family. In terms of assembly, homooctamer. It depends on Mg(2+) as a cofactor. Mn(2+) is required as a cofactor. Requires Co(2+) as cofactor. The cofactor is Ca(2+).

The enzyme catalyses NADH + ATP = ADP + NADPH + H(+). Functionally, ATP-NADH kinase with a low phosphorylation activity of both NADH and NAD(+) to produce NADP and NADPH by using ATP. UTR1 is responsible for essentially all of the NAD/NADH kinase activity resident in the cytoplasm, whereas POS5 is responsible for all mitochondrial NAD/NADH kinase activity and consequent mitochondrial genome maintenance. YEF1 can substitute for UTR1 when overexpressed. This is ATP-NADH kinase YEF1 (YEF1) from Saccharomyces cerevisiae (strain ATCC 204508 / S288c) (Baker's yeast).